Here is an 87-residue protein sequence, read N- to C-terminus: UPF0250 protein ESA_02696 (87 aa).

Belongs to the UPF0250 family.

The polypeptide is UPF0250 protein ESA_02696 (Cronobacter sakazakii (strain ATCC BAA-894) (Enterobacter sakazakii)).